A 196-amino-acid chain; its full sequence is Large ribosomal subunit protein bL9 (196 aa).

It belongs to the bacterial ribosomal protein bL9 family.

Functionally, binds to the 23S rRNA. This is Large ribosomal subunit protein bL9 from Bradyrhizobium sp. (strain ORS 278).